The sequence spans 153 residues: NAD(P)H-quinone oxidoreductase subunit N (153 aa).

The protein belongs to the complex I NdhN subunit family. As to quaternary structure, NDH-1 can be composed of about 15 different subunits; different subcomplexes with different compositions have been identified which probably have different functions.

The protein localises to the cellular thylakoid membrane. It carries out the reaction a plastoquinone + NADH + (n+1) H(+)(in) = a plastoquinol + NAD(+) + n H(+)(out). It catalyses the reaction a plastoquinone + NADPH + (n+1) H(+)(in) = a plastoquinol + NADP(+) + n H(+)(out). Functionally, NDH-1 shuttles electrons from an unknown electron donor, via FMN and iron-sulfur (Fe-S) centers, to quinones in the respiratory and/or the photosynthetic chain. The immediate electron acceptor for the enzyme in this species is believed to be plastoquinone. Couples the redox reaction to proton translocation, and thus conserves the redox energy in a proton gradient. Cyanobacterial NDH-1 also plays a role in inorganic carbon-concentration. This is NAD(P)H-quinone oxidoreductase subunit N from Prochlorococcus marinus (strain MIT 9313).